The following is a 444-amino-acid chain: Glutamyl-tRNA reductase (444 aa).

Residues Thr49 to Arg52, Ser109, Glu114 to Gln116, and Gln120 each bind substrate. Residue Cys50 is the Nucleophile of the active site. Gly189–Gly194 contacts NADP(+).

The protein belongs to the glutamyl-tRNA reductase family. As to quaternary structure, homodimer.

The catalysed reaction is (S)-4-amino-5-oxopentanoate + tRNA(Glu) + NADP(+) = L-glutamyl-tRNA(Glu) + NADPH + H(+). Its pathway is porphyrin-containing compound metabolism; protoporphyrin-IX biosynthesis; 5-aminolevulinate from L-glutamyl-tRNA(Glu): step 1/2. Catalyzes the NADPH-dependent reduction of glutamyl-tRNA(Glu) to glutamate 1-semialdehyde (GSA). The sequence is that of Glutamyl-tRNA reductase from Bacillus cereus (strain AH187).